The chain runs to 83 residues: Small ribosomal subunit protein uS17 (83 aa).

It belongs to the universal ribosomal protein uS17 family. In terms of assembly, part of the 30S ribosomal subunit.

In terms of biological role, one of the primary rRNA binding proteins, it binds specifically to the 5'-end of 16S ribosomal RNA. This Synechococcus sp. (strain RCC307) protein is Small ribosomal subunit protein uS17.